The chain runs to 624 residues: Phosphomethylpyrimidine synthase (624 aa).

Positions 40–61 (VPMRKISQSDTPTNTGREKNPP) are disordered. Residues 45 to 54 (ISQSDTPTNT) are compositionally biased toward polar residues. Substrate is bound by residues Asn-229, Met-258, Tyr-287, His-323, 343-345 (SRG), 384-387 (DGLR), and Glu-423. His-427 is a binding site for Zn(2+). Tyr-450 is a binding site for substrate. His-491 is a Zn(2+) binding site. Positions 571, 574, and 579 each coordinate [4Fe-4S] cluster.

It belongs to the ThiC family. As to quaternary structure, homodimer. The cofactor is [4Fe-4S] cluster.

The catalysed reaction is 5-amino-1-(5-phospho-beta-D-ribosyl)imidazole + S-adenosyl-L-methionine = 4-amino-2-methyl-5-(phosphooxymethyl)pyrimidine + CO + 5'-deoxyadenosine + formate + L-methionine + 3 H(+). The protein operates within cofactor biosynthesis; thiamine diphosphate biosynthesis. Catalyzes the synthesis of the hydroxymethylpyrimidine phosphate (HMP-P) moiety of thiamine from aminoimidazole ribotide (AIR) in a radical S-adenosyl-L-methionine (SAM)-dependent reaction. The sequence is that of Phosphomethylpyrimidine synthase from Methylococcus capsulatus (strain ATCC 33009 / NCIMB 11132 / Bath).